A 443-amino-acid polypeptide reads, in one-letter code: Thymidine phosphorylase (443 aa).

The protein belongs to the thymidine/pyrimidine-nucleoside phosphorylase family. Homodimer.

It carries out the reaction thymidine + phosphate = 2-deoxy-alpha-D-ribose 1-phosphate + thymine. The protein operates within pyrimidine metabolism; dTMP biosynthesis via salvage pathway; dTMP from thymine: step 1/2. Its function is as follows. The enzymes which catalyze the reversible phosphorolysis of pyrimidine nucleosides are involved in the degradation of these compounds and in their utilization as carbon and energy sources, or in the rescue of pyrimidine bases for nucleotide synthesis. The sequence is that of Thymidine phosphorylase from Shewanella baltica (strain OS223).